The chain runs to 517 residues: Meiosis-specific transcription factor mei4 (517 aa).

The segment at residues 81–172 (KPPCSYATLI…QNFVSVRLHR (92 aa)) is a DNA-binding region (fork-head). Residues 170-278 (LHRSHSTDSN…PNAETQEDLP (109 aa)) are disordered. A compositionally biased stretch (low complexity) spans 209–223 (NSFNSSTSTSGSSSN). Residues 230–246 (NDASQPSNQDSSLNSNI) show a composition bias toward polar residues. The segment covering 254–270 (SNVQSNSSSSENVPKPN) has biased composition (low complexity).

The protein resides in the nucleus. Functions as a meiosis-specific transcription factor. Binds to the 5'-GTAAAYA-3' consensus sequence of the promoter of the spo6 gene. This chain is Meiosis-specific transcription factor mei4 (mei4), found in Schizosaccharomyces pombe (strain 972 / ATCC 24843) (Fission yeast).